Reading from the N-terminus, the 622-residue chain is Chaperone protein HscA homolog (622 aa).

It belongs to the heat shock protein 70 family.

In terms of biological role, chaperone involved in the maturation of iron-sulfur cluster-containing proteins. Has a low intrinsic ATPase activity which is markedly stimulated by HscB. The chain is Chaperone protein HscA homolog from Burkholderia thailandensis (strain ATCC 700388 / DSM 13276 / CCUG 48851 / CIP 106301 / E264).